The sequence spans 337 residues: 1-aminocyclopropane-1-carboxylate deaminase (337 aa).

The residue at position 50 (Lys-50) is an N6-(pyridoxal phosphate)lysine. Residue Ser-77 is the Nucleophile of the active site.

Belongs to the ACC deaminase/D-cysteine desulfhydrase family. Homotrimer. Pyridoxal 5'-phosphate is required as a cofactor.

It catalyses the reaction 1-aminocyclopropane-1-carboxylate + H2O = 2-oxobutanoate + NH4(+). In terms of biological role, catalyzes a cyclopropane ring-opening reaction, the irreversible conversion of 1-aminocyclopropane-1-carboxylate (ACC) to ammonia and alpha-ketobutyrate. Allows growth on ACC as a nitrogen source. In Allorhizobium ampelinum (strain ATCC BAA-846 / DSM 112012 / S4) (Agrobacterium vitis (strain S4)), this protein is 1-aminocyclopropane-1-carboxylate deaminase.